A 335-amino-acid polypeptide reads, in one-letter code: Glycerol-3-phosphate dehydrogenase [NAD(P)+] (335 aa).

NADPH-binding residues include Trp-11, Arg-30, and Lys-106. Lys-106, Gly-135, and Ser-137 together coordinate sn-glycerol 3-phosphate. Ala-139 lines the NADPH pocket. 5 residues coordinate sn-glycerol 3-phosphate: Lys-190, Asp-243, Ser-253, Arg-254, and Asn-255. The Proton acceptor role is filled by Lys-190. NADPH is bound at residue Arg-254. NADPH is bound by residues Val-278 and Glu-280.

Belongs to the NAD-dependent glycerol-3-phosphate dehydrogenase family.

It localises to the cytoplasm. It carries out the reaction sn-glycerol 3-phosphate + NAD(+) = dihydroxyacetone phosphate + NADH + H(+). It catalyses the reaction sn-glycerol 3-phosphate + NADP(+) = dihydroxyacetone phosphate + NADPH + H(+). It functions in the pathway membrane lipid metabolism; glycerophospholipid metabolism. Its function is as follows. Catalyzes the reduction of the glycolytic intermediate dihydroxyacetone phosphate (DHAP) to sn-glycerol 3-phosphate (G3P), the key precursor for phospholipid synthesis. This Paucimonas lemoignei (Pseudomonas lemoignei) protein is Glycerol-3-phosphate dehydrogenase [NAD(P)+].